The sequence spans 177 residues: Inner membrane-spanning protein YciB (177 aa).

Helical transmembrane passes span 23 to 43 (MFVA…WAWF), 50 to 70 (TMQW…LLLH), 73 to 93 (HFIM…LLIS), 119 to 139 (LTWA…FVAY), and 149 to 169 (FKLF…SLFL).

Belongs to the YciB family.

The protein resides in the cell inner membrane. Functionally, plays a role in cell envelope biogenesis, maintenance of cell envelope integrity and membrane homeostasis. The protein is Inner membrane-spanning protein YciB of Chromobacterium violaceum (strain ATCC 12472 / DSM 30191 / JCM 1249 / CCUG 213 / NBRC 12614 / NCIMB 9131 / NCTC 9757 / MK).